The chain runs to 623 residues: Serine/threonine-protein kinase nrc-2 (623 aa).

A disordered region spans residues Met1–Arg215. 2 stretches are compositionally biased toward basic and acidic residues: residues Ser27–His36 and Leu170–Asp180. The segment covering Leu199–Ala209 has biased composition (low complexity). A Protein kinase domain is found at Phe242 to Phe532. Residues Ile248–Val256 and Lys271 contribute to the ATP site. The active-site Proton acceptor is the Asp367. A disordered region spans residues Val569–Val596.

Belongs to the protein kinase superfamily. Ser/Thr protein kinase family. KIN82 subfamily.

The catalysed reaction is L-seryl-[protein] + ATP = O-phospho-L-seryl-[protein] + ADP + H(+). It catalyses the reaction L-threonyl-[protein] + ATP = O-phospho-L-threonyl-[protein] + ADP + H(+). Functionally, controls entry of the cell into the asexual developmental program. Required to repress entry into the conidiation program. The sequence is that of Serine/threonine-protein kinase nrc-2 (nrc-2) from Neurospora crassa (strain ATCC 24698 / 74-OR23-1A / CBS 708.71 / DSM 1257 / FGSC 987).